We begin with the raw amino-acid sequence, 152 residues long: Superoxide dismutase [Cu-Zn] (152 aa).

The Cu cation site is built by histidine 45, histidine 47, and histidine 62. A disulfide bridge connects residues cysteine 56 and cysteine 145. 4 residues coordinate Zn(2+): histidine 62, histidine 70, histidine 79, and aspartate 82. Histidine 119 is a Cu cation binding site.

It belongs to the Cu-Zn superoxide dismutase family. As to quaternary structure, homodimer. Cu cation serves as cofactor. Requires Zn(2+) as cofactor.

Its subcellular location is the cytoplasm. It catalyses the reaction 2 superoxide + 2 H(+) = H2O2 + O2. In terms of biological role, destroys radicals which are normally produced within the cells and which are toxic to biological systems. This chain is Superoxide dismutase [Cu-Zn] (SODCC), found in Zantedeschia aethiopica (White calla lily).